The primary structure comprises 391 residues: Chaperone protein HtpG (391 aa).

Belongs to the heat shock protein 90 family. In terms of assembly, homodimer.

The protein resides in the cytoplasm. Its function is as follows. Molecular chaperone. Has ATPase activity. This chain is Chaperone protein HtpG (htpG), found in Aliivibrio fischeri (Vibrio fischeri).